The following is a 590-amino-acid chain: Myo-inositol transporter 3C (590 aa).

The Cytoplasmic segment spans residues 1 to 63 (MSRTPSSLDK…GEDKVTPYLC (63 aa)). Residues 64-86 (FLISASAIAGFLFGYDTGVVGVA) traverse the membrane as a helical segment. Residues 87 to 105 (LPLVGTDLGGSVLSSSQQE) lie on the Extracellular side of the membrane. The helical transmembrane segment at 106-126 (IITAGTTIGAIFGSAILGGWG) threads the bilayer. Over 127–132 (DRLGRK) the chain is Cytoplasmic. A helical transmembrane segment spans residues 133–153 (VAILIADVFFTVGAVLIAASY). At 154–162 (SVPQMIVGR) the chain is on the extracellular side. A helical transmembrane segment spans residues 163 to 183 (IVLGVGVGGAAAIAPLFITET). Over 184–192 (APTAVRGRC) the chain is Cytoplasmic. Residues 193-213 (IGVNAFFIPFGQVISEAIGAG) traverse the membrane as a helical segment. Topologically, residues 214-222 (VQDMKNGWR) are extracellular. Residues 223 to 243 (LLFALGAVPSLFQLILFHYLP) traverse the membrane as a helical segment. The Cytoplasmic portion of the chain corresponds to 244-325 (ESPRILILRG…TVSLIQMAGQ (82 aa)). Residues 326–346 (LSGFNTLLYYAGTLFSLLGLT) traverse the membrane as a helical segment. The Extracellular portion of the chain corresponds to 347–349 (NPA). A helical transmembrane segment spans residues 350–370 (LGGLIPAGTNAFFVLVGMTLV). Residues 371–376 (DKVGRR) lie on the Cytoplasmic side of the membrane. The chain crosses the membrane as a helical span at residues 377 to 397 (GLLMFGVPIMLAGLVWNIVAF). At 398–417 (HYLCIPTGGLLDTSYKYDTK) the chain is on the extracellular side. Residues 418–438 (LVGIVIGGIVFFTTGFGLTYS) traverse the membrane as a helical segment. Topologically, residues 439–454 (HLAWYQSEFLALEVRS) are cytoplasmic. The helical transmembrane segment at 455–475 (VGSGIATTANWVANLVVSVSY) threads the bilayer. The Extracellular portion of the chain corresponds to 476–485 (LTELETLTPS). The helical transmembrane segment at 486-506 (GTYGLYLGFSVVFFIFAVFCY) threads the bilayer. Topologically, residues 507-590 (PETKQLSIDE…NGAKRFPISR (84 aa)) are cytoplasmic.

It belongs to the major facilitator superfamily. Sugar transporter (TC 2.A.1.1) family.

The protein localises to the cell membrane. It catalyses the reaction myo-inositol(out) + H(+)(out) = myo-inositol(in) + H(+)(in). Its function is as follows. Major transporter for myo-inositol. Plays a role in the traversal of the host blood-brain barrier. The polypeptide is Myo-inositol transporter 3C (Cryptococcus neoformans var. grubii serotype A (strain H99 / ATCC 208821 / CBS 10515 / FGSC 9487) (Filobasidiella neoformans var. grubii)).